Reading from the N-terminus, the 394-residue chain is Ribulose bisphosphate carboxylase large chain (394 aa).

Lys5 is subject to N6,N6,N6-trimethyllysine. Residues Asn114 and Thr164 each coordinate substrate. The Proton acceptor role is filled by Lys166. Substrate is bound at residue Lys168. Positions 192, 194, and 195 each coordinate Mg(2+). Lys192 carries the N6-carboxylysine modification. His285 acts as the Proton acceptor in catalysis. Arg286, His318, and Ser370 together coordinate substrate.

This sequence belongs to the RuBisCO large chain family. Type I subfamily. In terms of assembly, heterohexadecamer of 8 large chains and 8 small chains. The cofactor is Mg(2+).

Its subcellular location is the plastid. The protein resides in the chloroplast. The enzyme catalyses 2 (2R)-3-phosphoglycerate + 2 H(+) = D-ribulose 1,5-bisphosphate + CO2 + H2O. It carries out the reaction D-ribulose 1,5-bisphosphate + O2 = 2-phosphoglycolate + (2R)-3-phosphoglycerate + 2 H(+). Its function is as follows. RuBisCO catalyzes two reactions: the carboxylation of D-ribulose 1,5-bisphosphate, the primary event in carbon dioxide fixation, as well as the oxidative fragmentation of the pentose substrate in the photorespiration process. Both reactions occur simultaneously and in competition at the same active site. This Victoria cruziana (Santa Cruz water lily) protein is Ribulose bisphosphate carboxylase large chain (rbcL).